The chain runs to 243 residues: Ubiquinone biosynthesis O-methyltransferase (243 aa).

S-adenosyl-L-methionine is bound by residues R44, G64, D85, and M129.

It belongs to the methyltransferase superfamily. UbiG/COQ3 family.

It catalyses the reaction a 3-demethylubiquinol + S-adenosyl-L-methionine = a ubiquinol + S-adenosyl-L-homocysteine + H(+). The enzyme catalyses a 3-(all-trans-polyprenyl)benzene-1,2-diol + S-adenosyl-L-methionine = a 2-methoxy-6-(all-trans-polyprenyl)phenol + S-adenosyl-L-homocysteine + H(+). It functions in the pathway cofactor biosynthesis; ubiquinone biosynthesis. O-methyltransferase that catalyzes the 2 O-methylation steps in the ubiquinone biosynthetic pathway. This is Ubiquinone biosynthesis O-methyltransferase from Erwinia tasmaniensis (strain DSM 17950 / CFBP 7177 / CIP 109463 / NCPPB 4357 / Et1/99).